Consider the following 517-residue polypeptide: tRNA-2-methylthio-N(6)-dimethylallyladenosine synthase (517 aa).

An MTTase N-terminal domain is found at 18-137; the sequence is RTYQVRTYGC…LPTLLDRARH (120 aa). [4Fe-4S] cluster-binding residues include cysteine 27, cysteine 66, cysteine 100, cysteine 174, cysteine 178, and cysteine 181. Residues 160 to 397 enclose the Radical SAM core domain; that stretch reads RESDYAAWVS…ELQEQICMEE (238 aa). In terms of domain architecture, TRAM spans 399 to 470; it reads RVLIGRIVEL…PHHLIADAGI (72 aa).

It belongs to the methylthiotransferase family. MiaB subfamily. In terms of assembly, monomer. It depends on [4Fe-4S] cluster as a cofactor.

It localises to the cytoplasm. It carries out the reaction N(6)-dimethylallyladenosine(37) in tRNA + (sulfur carrier)-SH + AH2 + 2 S-adenosyl-L-methionine = 2-methylsulfanyl-N(6)-dimethylallyladenosine(37) in tRNA + (sulfur carrier)-H + 5'-deoxyadenosine + L-methionine + A + S-adenosyl-L-homocysteine + 2 H(+). Catalyzes the methylthiolation of N6-(dimethylallyl)adenosine (i(6)A), leading to the formation of 2-methylthio-N6-(dimethylallyl)adenosine (ms(2)i(6)A) at position 37 in tRNAs that read codons beginning with uridine. The protein is tRNA-2-methylthio-N(6)-dimethylallyladenosine synthase of Mycobacterium leprae (strain TN).